A 126-amino-acid polypeptide reads, in one-letter code: Methylglyoxal synthase (126 aa).

One can recognise an MGS-like domain in the interval 1 to 126 (MEKKIALIAH…LIKGFEGLNT (126 aa)). Substrate contacts are provided by residues H10, K14, 36–39 (TGTT), and 56–57 (SG). The active-site Proton donor/acceptor is D62. Residue H89 participates in substrate binding.

This sequence belongs to the methylglyoxal synthase family.

It carries out the reaction dihydroxyacetone phosphate = methylglyoxal + phosphate. Functionally, catalyzes the formation of methylglyoxal from dihydroxyacetone phosphate. The chain is Methylglyoxal synthase from Borrelia garinii subsp. bavariensis (strain ATCC BAA-2496 / DSM 23469 / PBi) (Borreliella bavariensis).